The chain runs to 652 residues: Regulator of DNA class I crossover intermediates 1 (652 aa).

The binds DNA containing a D-loop DNA-binding region spans 1 to 231 (MNWVGGSRSR…TLFERLNSLG (231 aa)). 2 disordered regions span residues 363-434 (NKTS…NIPS) and 469-506 (KISLDSAQSSRSTSYSPRPTDSCFSSSSDLPSEDEDQI). Residues 377–388 (YQREYNKNERND) are compositionally biased toward basic and acidic residues. A compositionally biased stretch (polar residues) spans 389 to 401 (LSTSFENDYYPSS). Positions 402–417 (SERKEKFENDYQEKTP) are enriched in basic and acidic residues. Residues 473–498 (DSAQSSRSTSYSPRPTDSCFSSSSDL) show a composition bias toward low complexity.

As to quaternary structure, interacts with MSH5. Interacts with TEX11.

The protein localises to the chromosome. Functionally, involved in recombination, probably acting by stabilizing recombination intermediates during meiotic crossover formation. Required for normal germline development and fertility. Required for meiotic progression, complete chromosomal synapsis and crossover formation. Binds double-stranded DNA. However, also binds branched DNA molecules, such as those containing a D-loop or Holliday junction structure. Probably not required for formation of DNA double-strand breaks (DSBs). Also binds RNA in an RNA structure-independent manner, with a preference for binding 3'-UTR regions of mRNAs; may stabilize bound RNAs. The protein is Regulator of DNA class I crossover intermediates 1 of Homo sapiens (Human).